The primary structure comprises 414 residues: Histidine--tRNA ligase (414 aa).

The protein belongs to the class-II aminoacyl-tRNA synthetase family. As to quaternary structure, homodimer.

It is found in the cytoplasm. The enzyme catalyses tRNA(His) + L-histidine + ATP = L-histidyl-tRNA(His) + AMP + diphosphate + H(+). This chain is Histidine--tRNA ligase, found in Rickettsia rickettsii (strain Iowa).